A 1161-amino-acid polypeptide reads, in one-letter code: Translation initiation factor IF-2 (1161 aa).

The segment at 67-561 (KSSFKAANEQ…RRAMELRAAK (495 aa)) is disordered. Residues 83-105 (QNKDSNSRSKPLNKEKPSKESLN) show a composition bias toward basic and acidic residues. Over residues 139-154 (SRISNLQSQVLPNSHN) the composition is skewed to polar residues. Basic and acidic residues-rich tracts occupy residues 164–180 (NPNE…EKKS) and 211–220 (KDIKANKKND). Low complexity-rich tracts occupy residues 224–250 (NQRP…PRIK) and 268–282 (NSNR…PPSN). Composition is skewed to polar residues over residues 295 to 311 (RQVT…QGVS), 352 to 362 (RQGAPNRQGSP), and 380 to 393 (LNRS…QNPS). A compositionally biased stretch (basic and acidic residues) spans 412-432 (ASDKEKLNRSNFEKQKVEPPK). Residues 440–461 (SRLNASPTAKKTPHRSFTNNSK) show a composition bias toward polar residues. Basic and acidic residues-rich tracts occupy residues 464-478 (GRSD…EALR) and 543-561 (KETT…RAAK). In terms of domain architecture, tr-type G spans 653-830 (KRPPVITVMG…EVEDLQANPE (178 aa)). The interval 662 to 669 (GHVDHGKT) is G1. GTP is bound at residue 662–669 (GHVDHGKT). The tract at residues 687–691 (GITQH) is G2. Residues 712 to 715 (DTPG) form a G3 region. GTP-binding positions include 712 to 716 (DTPGH) and 766 to 769 (NKID). Positions 766–769 (NKID) are G4. Residues 802–804 (SAI) are G5.

The protein belongs to the TRAFAC class translation factor GTPase superfamily. Classic translation factor GTPase family. IF-2 subfamily.

It is found in the cytoplasm. Functionally, one of the essential components for the initiation of protein synthesis. Protects formylmethionyl-tRNA from spontaneous hydrolysis and promotes its binding to the 30S ribosomal subunits. Also involved in the hydrolysis of GTP during the formation of the 70S ribosomal complex. This chain is Translation initiation factor IF-2, found in Prochlorococcus marinus (strain MIT 9515).